The chain runs to 234 residues: MHSTMSVQHGLVALVLIGCLAHPWHVEACSSRTVPKPRSSISSSMSGTALPPTQAPVTSSTTMRTTTTTTPRPNITFPTYKCPETFDAWYCLNDAHCFAVKIADLPVYSCECAIGFMGQRCEYKEIDNTYLPKRPRPMLEKASIASGAMCALVFMLFVCLAFYLRFEQRAAKKAYELEQELQQEYDDDDGQCECCRNRCCPDGQEPVILERKLPYHMRLEHALMSFAIRRSNKL.

The N-terminal stretch at 1–28 is a signal peptide; it reads MHSTMSVQHGLVALVLIGCLAHPWHVEA. Topologically, residues 29 to 143 are lumenal; it reads CSSRTVPKPR…RPRPMLEKAS (115 aa). The disordered stretch occupies residues 33-71; it reads TVPKPRSSISSSMSGTALPPTQAPVTSSTTMRTTTTTTP. Over residues 56–71 the composition is skewed to low complexity; sequence PVTSSTTMRTTTTTTP. A glycan (N-linked (GlcNAc...) asparagine) is linked at Asn-74. Residues 78-122 form the EGF-like domain; it reads PTYKCPETFDAWYCLNDAHCFAVKIADLPVYSCECAIGFMGQRCE. Disulfide bonds link Cys-82–Cys-97, Cys-91–Cys-110, and Cys-112–Cys-121. The helical transmembrane segment at 144–164 threads the bilayer; the sequence is IASGAMCALVFMLFVCLAFYL. Topologically, residues 165–234 are cytoplasmic; sequence RFEQRAAKKA…SFAIRRSNKL (70 aa).

Interacts with Star via the lumenal domain. Proteolytic processing by Rhomboid occurs in the Golgi. Cleavage takes place within the transmembrane domain close to residue 144 and the active growth factor is released. Post-translationally, N-glycosylated and O-glycosylated. In terms of tissue distribution, expressed throughout the embryo.

It is found in the cell membrane. The protein localises to the endoplasmic reticulum membrane. It localises to the golgi apparatus membrane. In terms of biological role, ligand for the EGF receptor (Gurken). Involved in a number of unrelated developmental choices, for example, dorsal-ventral axis formation, glial migration, sensory organ determination, and muscle development. It is required for photoreceptor determination. The polypeptide is Protein spitz (spi) (Drosophila melanogaster (Fruit fly)).